The chain runs to 206 residues: 2-phospho-L-lactate guanylyltransferase (206 aa).

It belongs to the CofC family. In terms of assembly, homodimer.

The catalysed reaction is (2S)-2-phospholactate + GTP + H(+) = (2S)-lactyl-2-diphospho-5'-guanosine + diphosphate. The protein operates within cofactor biosynthesis; coenzyme F420 biosynthesis. Functionally, guanylyltransferase that catalyzes the activation of (2S)-2-phospholactate (2-PL) as (2S)-lactyl-2-diphospho-5'-guanosine, via the condensation of 2-PL with GTP. It is involved in the biosynthesis of coenzyme F420, a hydride carrier cofactor. In Archaeoglobus profundus (strain DSM 5631 / JCM 9629 / NBRC 100127 / Av18), this protein is 2-phospho-L-lactate guanylyltransferase.